The primary structure comprises 180 residues: Large ribosomal subunit protein uL5 (180 aa).

Belongs to the universal ribosomal protein uL5 family. Part of the 50S ribosomal subunit; part of the 5S rRNA/L5/L18/L25 subcomplex. Contacts the 5S rRNA and the P site tRNA. Forms a bridge to the 30S subunit in the 70S ribosome.

Functionally, this is one of the proteins that bind and probably mediate the attachment of the 5S RNA into the large ribosomal subunit, where it forms part of the central protuberance. In the 70S ribosome it contacts protein S13 of the 30S subunit (bridge B1b), connecting the 2 subunits; this bridge is implicated in subunit movement. Contacts the P site tRNA; the 5S rRNA and some of its associated proteins might help stabilize positioning of ribosome-bound tRNAs. This Clostridium botulinum (strain ATCC 19397 / Type A) protein is Large ribosomal subunit protein uL5.